The following is a 4568-amino-acid chain: Dynein beta chain, flagellar outer arm (4568 aa).

The interval 1–1880 (MAEDEGMTAA…QVNICDAEIA (1880 aa)) is stem. Coiled-coil stretches lie at residues 277–293 (FQRL…EAND), 1158–1175 (EEAA…RKAL), 1372–1400 (KIDV…RNYD), 1614–1650 (EACT…RVAF), and 1778–1825 (QEIN…RKKL). The segment at 1144–1166 (GVEEEPEYHPDQDPEEAAAKKAA) is disordered. Residues 1150–1166 (EYHPDQDPEEAAAKKAA) show a composition bias toward basic and acidic residues. AAA stretches follow at residues 1881-2102 (YSYE…TLYV), 2164-2385 (EAAH…RNFK), 2493-2738 (QYIP…ITQG), and 2841-3090 (EYNE…FRRY). ATP is bound by residues 1919 to 1926 (GPAGTGKT), 2202 to 2209 (GAAGCGKT), and 2530 to 2537 (GNTGTGKS). Residues 2831–2848 (LRKTLEDKLREYNESNAV) adopt a coiled-coil conformation. 2879 to 2886 (GVGGSGKQ) is a binding site for ATP. 3 coiled-coil regions span residues 3106 to 3162 (KMLL…DELI), 3339 to 3425 (KRAA…RLES), and 3648 to 3728 (HERP…KARE). The stalk stretch occupies residues 3106–3425 (KMLLQLKRDD…WGAEIKRLES (320 aa)). 2 AAA regions span residues 3481–3711 (LTDD…EIEE) and 3937–4172 (MGRF…TANN).

It belongs to the dynein heavy chain family. As to quaternary structure, consists of at least 3 heavy chains (alpha, beta and gamma), 2 intermediate chains and 8 light chains.

It is found in the cell projection. It localises to the cilium. The protein localises to the flagellum. The protein resides in the cytoplasm. Its subcellular location is the cytoskeleton. It is found in the flagellum axoneme. Its function is as follows. Force generating protein of eukaryotic cilia and flagella. Produces force towards the minus ends of microtubules. Dynein has ATPase activity; the force-producing power stroke is thought to occur on release of ADP. This Chlamydomonas reinhardtii (Chlamydomonas smithii) protein is Dynein beta chain, flagellar outer arm (ODA4).